Here is a 251-residue protein sequence, read N- to C-terminus: Flap endonuclease Xni (251 aa).

Aspartate 104 provides a ligand contact to Mg(2+). Residues 160–249 (VQPQQLPDYW…IDGNLQQLRL (90 aa)) form the 5'-3' exonuclease domain. Leucine 171, alanine 172, proline 180, valine 182, and isoleucine 185 together coordinate K(+). Residues 184–189 (GIGPKS) form an interaction with DNA region.

The protein belongs to the Xni family. It depends on Mg(2+) as a cofactor. K(+) serves as cofactor.

Functionally, has flap endonuclease activity. During DNA replication, flap endonucleases cleave the 5'-overhanging flap structure that is generated by displacement synthesis when DNA polymerase encounters the 5'-end of a downstream Okazaki fragment. This chain is Flap endonuclease Xni, found in Shigella flexneri serotype 5b (strain 8401).